A 243-amino-acid polypeptide reads, in one-letter code: uncharacterized protein (243 aa).

Helical transmembrane passes span 38-58 (AYFL…VGIF), 99-119 (FGIA…FLGY), 143-163 (FYFS…FLVL), and 204-224 (AFAT…LGLF).

The protein localises to the cell membrane. This is an uncharacterized protein from Mycoplasma pneumoniae (strain ATCC 29342 / M129 / Subtype 1) (Mycoplasmoides pneumoniae).